The primary structure comprises 430 residues: Adenylosuccinate synthetase (430 aa).

Residues 12–18 (GDEGKGK) and 40–42 (GHT) contribute to the GTP site. Residue Asp-13 is the Proton acceptor of the active site. Mg(2+)-binding residues include Asp-13 and Gly-40. IMP contacts are provided by residues 13-16 (DEGK), 38-41 (NAGH), Thr-128, Arg-142, Gln-223, Thr-238, and Arg-302. The active-site Proton donor is His-41. 298 to 304 (TTTGRPR) is a substrate binding site. GTP-binding positions include Arg-304, 330-332 (SID), and 412-414 (SVG).

Belongs to the adenylosuccinate synthetase family. As to quaternary structure, homodimer. The cofactor is Mg(2+).

Its subcellular location is the cytoplasm. It carries out the reaction IMP + L-aspartate + GTP = N(6)-(1,2-dicarboxyethyl)-AMP + GDP + phosphate + 2 H(+). Its pathway is purine metabolism; AMP biosynthesis via de novo pathway; AMP from IMP: step 1/2. Functionally, plays an important role in the de novo pathway of purine nucleotide biosynthesis. Catalyzes the first committed step in the biosynthesis of AMP from IMP. The polypeptide is Adenylosuccinate synthetase (Streptococcus pyogenes serotype M49 (strain NZ131)).